The sequence spans 95 residues: MFMTTYFDTRKNFCEVVFSKAPKDLPAHLQLTSESIKNYVDVVCPLEFRTVNGRDTLAITKLNREIDIDPSIAREINISDIGGGNVKSHGFQMRF.

This is an uncharacterized protein from Enterobacteria phage T4 (Bacteriophage T4).